The following is a 276-amino-acid chain: MHPAAEHSPLGKSSEYIATYSPEQLFPIPRTAKWAELGVTAQTLPWQGVDYWNCFELSWLLPSGKPVVAIGEFAIPADSPNIIESKSFKLYLNSLNQTVFASLDALQACLEKDLSAAAGKPVGVKVRTLAEVEAQGVVALPGQCIDALDVAISNYEQPQPELLRCDPARVVEETLHSHLLKSNCPVTGQPDWGSVVVEYKGRALDHASLLTYLISFRQHADFHEQCVERIYLDLKNLLQPEHLTVYARYVRRGGLDINPYRSTGAISPDNKRLVRQ.

83-85 (IES) is a substrate binding site. 85 to 86 (SK) serves as a coordination point for NADPH. Catalysis depends on Cys-184, which acts as the Thioimide intermediate. Asp-191 (proton donor) is an active-site residue. 223–224 (HE) serves as a coordination point for substrate. 252–253 (RG) is an NADPH binding site.

This sequence belongs to the GTP cyclohydrolase I family. QueF type 2 subfamily. As to quaternary structure, homodimer.

The protein resides in the cytoplasm. The catalysed reaction is 7-aminomethyl-7-carbaguanine + 2 NADP(+) = 7-cyano-7-deazaguanine + 2 NADPH + 3 H(+). It functions in the pathway tRNA modification; tRNA-queuosine biosynthesis. Functionally, catalyzes the NADPH-dependent reduction of 7-cyano-7-deazaguanine (preQ0) to 7-aminomethyl-7-deazaguanine (preQ1). The protein is NADPH-dependent 7-cyano-7-deazaguanine reductase of Pseudomonas putida (strain ATCC 700007 / DSM 6899 / JCM 31910 / BCRC 17059 / LMG 24140 / F1).